The sequence spans 296 residues: Arginase (296 aa).

Positions 98, 124, 126, and 128 each coordinate Mn(2+). Positions 130, 137, and 178 each coordinate L-arginine. Mn(2+) is bound by residues D225 and D227. L-arginine is bound by residues D227 and T239.

The protein belongs to the arginase family. In terms of assembly, monomer. Homodimer; dimerization is dispensable for catalytic activity. Requires Mn(2+) as cofactor.

It carries out the reaction L-arginine + H2O = urea + L-ornithine. Its pathway is nitrogen metabolism; urea cycle; L-ornithine and urea from L-arginine: step 1/1. Its activity is regulated as follows. Substitution of the loosely bound surface exposed Mn(2+) with Mg(2+), Zn(2+), Ni(2+) or Co(2+) results in similar catalytic activity, substitution with Cd(2+) and Cu(2+) reduces catalytic activity and substitution with Hg(2+) and Ca(2+) inhibits the enzyme. Inhibited by L-norvaline. In terms of biological role, catalyzes the hydrolysis of L-arginine into urea and L-ornithine, which is a precursor for polyamine biosynthesis. By depleting host L-arginine, a substrate for nitric oxide synthase (NOS), prevents the production of nitric oxide (NO) by host activated macrophages, and thus allows the parasite to evade host immune response. The polypeptide is Arginase (Entamoeba histolytica (strain ATCC 30459 / HM-1:IMSS / ABRM)).